A 1254-amino-acid chain; its full sequence is DNA polymerase gamma (1254 aa).

Basic and acidic residues predominate over residues 1125 to 1137 (RKKENRIDDENKK). Disordered regions lie at residues 1125-1145 (RKKE…KKNT) and 1202-1240 (YKKK…TNRN). A compositionally biased stretch (polar residues) spans 1208–1217 (QARTASSSPI). Over residues 1219 to 1231 (KTAKAVHSKKLPA) the composition is skewed to basic residues.

This sequence belongs to the DNA polymerase type-A family. The cofactor is Mg(2+).

The protein localises to the mitochondrion. It carries out the reaction DNA(n) + a 2'-deoxyribonucleoside 5'-triphosphate = DNA(n+1) + diphosphate. Its function is as follows. Involved in the replication of mitochondrial DNA. This Saccharomyces cerevisiae (strain ATCC 204508 / S288c) (Baker's yeast) protein is DNA polymerase gamma (MIP1).